Here is a 343-residue protein sequence, read N- to C-terminus: Ferredoxin--NADP reductase (343 aa).

FAD is bound by residues Asp-36, Gln-44, Tyr-49, Val-89, Phe-124, Asp-289, and Thr-330.

Belongs to the ferredoxin--NADP reductase type 2 family. Homodimer. The cofactor is FAD.

It carries out the reaction 2 reduced [2Fe-2S]-[ferredoxin] + NADP(+) + H(+) = 2 oxidized [2Fe-2S]-[ferredoxin] + NADPH. The protein is Ferredoxin--NADP reductase of Mesorhizobium japonicum (strain LMG 29417 / CECT 9101 / MAFF 303099) (Mesorhizobium loti (strain MAFF 303099)).